Here is a 181-residue protein sequence, read N- to C-terminus: MKFLFDYFPIICFFVAYKFWGIYIATAAAMVVSALQVAIYWIRFRRFEKFHVITLIFILLLGSFTLVFHNAIFIKWKPTIVYWIFAIVLFGSHFFGKHTLVHRMLKEKIELPAKTWSRLNLSWALFFLILGVLNLFVVYNFDTNTWVNFKLFGTLALMLVFILGQAFYIARHAQNLKTNSR.

Helical transmembrane passes span 8 to 28, 53 to 73, 76 to 96, 121 to 141, and 149 to 169; these read FPII…ATAA, ITLI…NAIF, WKPT…HFFG, LSWA…VYNF, and FKLF…AFYI.

The protein belongs to the YciB family.

It localises to the cell inner membrane. Functionally, plays a role in cell envelope biogenesis, maintenance of cell envelope integrity and membrane homeostasis. The chain is Inner membrane-spanning protein YciB from Coxiella burnetii (strain CbuK_Q154) (Coxiella burnetii (strain Q154)).